The following is a 161-amino-acid chain: Cytochrome c-type biogenesis protein CcmE (161 aa).

The Cytoplasmic segment spans residues 1–8; that stretch reads MNPVRKKR. Residues 9-29 traverse the membrane as a helical; Signal-anchor for type II membrane protein segment; that stretch reads LYIVLAILCGVSIAVALALTA. Over 30–161 the chain is Periplasmic; it reads LQENINLFYT…AKGYQQESAQ (132 aa). Heme is bound by residues histidine 124 and tyrosine 128.

It belongs to the CcmE/CycJ family.

It is found in the cell inner membrane. Heme chaperone required for the biogenesis of c-type cytochromes. Transiently binds heme delivered by CcmC and transfers the heme to apo-cytochromes in a process facilitated by CcmF and CcmH. In Ectopseudomonas mendocina (strain ymp) (Pseudomonas mendocina), this protein is Cytochrome c-type biogenesis protein CcmE.